The sequence spans 157 residues: MTITVDIEIEDEAWTTAEADAEALVWRAAQAVLDAHEDIEGQGIVILLTDDDSVQALNRDFRKKDYATNVLSFPSPPNPEGQIGDIALAYGVCAREAAEQGKPLAHHLQHLVAHGVLHLLGYDHERDDEAEAMEALEREILAGLDVPDPYASDEEGR.

3 residues coordinate Zn(2+): histidine 114, histidine 118, and histidine 124.

It belongs to the endoribonuclease YbeY family. Zn(2+) is required as a cofactor.

The protein localises to the cytoplasm. Its function is as follows. Single strand-specific metallo-endoribonuclease involved in late-stage 70S ribosome quality control and in maturation of the 3' terminus of the 16S rRNA. The chain is Endoribonuclease YbeY from Caulobacter vibrioides (strain ATCC 19089 / CIP 103742 / CB 15) (Caulobacter crescentus).